The primary structure comprises 143 residues: Hemoglobin subunit alpha-1 (143 aa).

Ser-2 is modified (N-acetylserine). Positions 2-143 (SLSSKDKATV…LALALAEKYR (142 aa)) constitute a Globin domain. O2 is bound at residue His-60. Heme b is bound at residue His-89.

It belongs to the globin family. Hb 1 is a heterotetramer of two alpha-1 and two beta-1 chains. Red blood cells.

Functionally, involved in oxygen transport from gills to the various peripheral tissues. The protein is Hemoglobin subunit alpha-1 (hba1) of Arctogadus glacialis (Arctic cod).